A 298-amino-acid polypeptide reads, in one-letter code: Ribosomal RNA small subunit methyltransferase A (298 aa).

6 residues coordinate S-adenosyl-L-methionine: asparagine 35, leucine 37, glycine 62, glutamate 83, aspartate 108, and asparagine 133.

It belongs to the class I-like SAM-binding methyltransferase superfamily. rRNA adenine N(6)-methyltransferase family. RsmA subfamily.

It localises to the cytoplasm. The enzyme catalyses adenosine(1518)/adenosine(1519) in 16S rRNA + 4 S-adenosyl-L-methionine = N(6)-dimethyladenosine(1518)/N(6)-dimethyladenosine(1519) in 16S rRNA + 4 S-adenosyl-L-homocysteine + 4 H(+). Specifically dimethylates two adjacent adenosines (A1518 and A1519) in the loop of a conserved hairpin near the 3'-end of 16S rRNA in the 30S particle. May play a critical role in biogenesis of 30S subunits. The sequence is that of Ribosomal RNA small subunit methyltransferase A from Streptococcus pyogenes serotype M2 (strain MGAS10270).